A 188-amino-acid polypeptide reads, in one-letter code: UPF0301 protein Smlt1098 (188 aa).

The protein belongs to the UPF0301 (AlgH) family.

This Stenotrophomonas maltophilia (strain K279a) protein is UPF0301 protein Smlt1098.